A 566-amino-acid chain; its full sequence is Proline--tRNA ligase (566 aa).

It belongs to the class-II aminoacyl-tRNA synthetase family. ProS type 1 subfamily. As to quaternary structure, homodimer.

The protein localises to the cytoplasm. The enzyme catalyses tRNA(Pro) + L-proline + ATP = L-prolyl-tRNA(Pro) + AMP + diphosphate. In terms of biological role, catalyzes the attachment of proline to tRNA(Pro) in a two-step reaction: proline is first activated by ATP to form Pro-AMP and then transferred to the acceptor end of tRNA(Pro). As ProRS can inadvertently accommodate and process non-cognate amino acids such as alanine and cysteine, to avoid such errors it has two additional distinct editing activities against alanine. One activity is designated as 'pretransfer' editing and involves the tRNA(Pro)-independent hydrolysis of activated Ala-AMP. The other activity is designated 'posttransfer' editing and involves deacylation of mischarged Ala-tRNA(Pro). The misacylated Cys-tRNA(Pro) is not edited by ProRS. The chain is Proline--tRNA ligase from Bacillus cereus (strain AH187).